The chain runs to 462 residues: Anthranilate synthase component 1 (462 aa).

L-tryptophan is bound by residues serine 46 and 243–245 (PHM). 278–279 (GT) provides a ligand contact to chorismate. Glutamate 305 is a binding site for Mg(2+). Residues tyrosine 394, arginine 414, 428–430 (SGG), and glycine 430 each bind chorismate. Residue glutamate 444 participates in Mg(2+) binding.

The protein belongs to the anthranilate synthase component I family. As to quaternary structure, heterotetramer consisting of two non-identical subunits: a beta subunit (TrpG) and a large alpha subunit (TrpE). It depends on Mg(2+) as a cofactor.

It catalyses the reaction chorismate + L-glutamine = anthranilate + pyruvate + L-glutamate + H(+). It functions in the pathway amino-acid biosynthesis; L-tryptophan biosynthesis; L-tryptophan from chorismate: step 1/5. Its activity is regulated as follows. Feedback inhibited by tryptophan. In terms of biological role, part of a heterotetrameric complex that catalyzes the two-step biosynthesis of anthranilate, an intermediate in the biosynthesis of L-tryptophan. In the first step, the glutamine-binding beta subunit (TrpG) of anthranilate synthase (AS) provides the glutamine amidotransferase activity which generates ammonia as a substrate that, along with chorismate, is used in the second step, catalyzed by the large alpha subunit of AS (TrpE) to produce anthranilate. In the absence of TrpG, TrpE can synthesize anthranilate directly from chorismate and high concentrations of ammonia. The polypeptide is Anthranilate synthase component 1 (trpE) (Leptospira biflexa).